The primary structure comprises 337 residues: Glycine N(alpha)-acyltransferase (337 aa).

The protein belongs to the acetyltransferase family.

It carries out the reaction a (3R)-hydroxyacyl-[ACP] + glycine = a lyso-glycine lipid + holo-[ACP] + H(+). It catalyses the reaction (3R)-hydroxyhexadecanoyl-[ACP] + glycine = N-[(3R)-3-hydroxyhexadecanoyl]-glycine + holo-[ACP] + H(+). Its pathway is lipid metabolism. Functionally, is involved in the production of glycine lipids (GL), which are phosphorus-free membrane lipids important for fitness during growth of the human gut bacterium B.thetaiotaomicron in vivo and in vitro. Catalyzes the first step of GL biosynthesis, i.e. the N-acylation of glycine via addition of a 3-hydroxy fatty acyl group, to form a range of monoacylated glycine (also named lyso-glycine lipids or lyso-GL). Is important for the ability of B.thetaiotaomicron to adapt to stress and colonize the mammalian gut. Also seems to be required for the production of flavolipin, an acylated serine-glycine dipeptide. This Bacteroides thetaiotaomicron (strain ATCC 29148 / DSM 2079 / JCM 5827 / CCUG 10774 / NCTC 10582 / VPI-5482 / E50) protein is Glycine N(alpha)-acyltransferase.